A 611-amino-acid chain; its full sequence is Methionine--tRNA ligase (611 aa).

The 'HIGH' region motif lies at 12–22 (PYANGPRHIGH). Residues Cys-144, Cys-147, Cys-157, and Cys-160 each coordinate Zn(2+). The 'KMSKS' region signature appears at 348–352 (KFSSS). Ser-351 is an ATP binding site.

Belongs to the class-I aminoacyl-tRNA synthetase family. MetG type 1 subfamily. In terms of assembly, monomer. Zn(2+) is required as a cofactor.

The protein localises to the cytoplasm. The catalysed reaction is tRNA(Met) + L-methionine + ATP = L-methionyl-tRNA(Met) + AMP + diphosphate. In terms of biological role, is required not only for elongation of protein synthesis but also for the initiation of all mRNA translation through initiator tRNA(fMet) aminoacylation. This is Methionine--tRNA ligase from Corynebacterium urealyticum (strain ATCC 43042 / DSM 7109).